Consider the following 440-residue polypeptide: Ribulose bisphosphate carboxylase large chain (440 aa).

Lys4 carries the post-translational modification N6,N6,N6-trimethyllysine. Positions 113 and 163 each coordinate substrate. Lys165 functions as the Proton acceptor in the catalytic mechanism. Lys167 provides a ligand contact to substrate. Mg(2+) is bound by residues Lys191, Asp193, and Glu194. The residue at position 191 (Lys191) is an N6-carboxylysine. His284 functions as the Proton acceptor in the catalytic mechanism. Positions 285, 317, and 369 each coordinate substrate.

The protein belongs to the RuBisCO large chain family. Type I subfamily. In terms of assembly, heterohexadecamer of 8 large chains and 8 small chains; disulfide-linked. The disulfide link is formed within the large subunit homodimers. Requires Mg(2+) as cofactor. In terms of processing, the disulfide bond which can form in the large chain dimeric partners within the hexadecamer appears to be associated with oxidative stress and protein turnover.

It is found in the plastid. The protein localises to the chloroplast. The enzyme catalyses 2 (2R)-3-phosphoglycerate + 2 H(+) = D-ribulose 1,5-bisphosphate + CO2 + H2O. It carries out the reaction D-ribulose 1,5-bisphosphate + O2 = 2-phosphoglycolate + (2R)-3-phosphoglycerate + 2 H(+). Functionally, ruBisCO catalyzes two reactions: the carboxylation of D-ribulose 1,5-bisphosphate, the primary event in carbon dioxide fixation, as well as the oxidative fragmentation of the pentose substrate in the photorespiration process. Both reactions occur simultaneously and in competition at the same active site. This chain is Ribulose bisphosphate carboxylase large chain, found in Onoclea sensibilis (Sensitive fern).